We begin with the raw amino-acid sequence, 410 residues long: Probable peptidoglycan glycosyltransferase FtsW (410 aa).

Over 1 to 37 the chain is Cytoplasmic; the sequence is MRSEERQLNLFGTSVNWSWPNLFKEREAPGMQLYDRA. A helical membrane pass occupies residues 38–58; that stretch reads LLFAVLSLICFGFVMVMSASM. At 59–69 the chain is on the periplasmic side; it reads PEAQSLTGNPY. Residues 70 to 90 form a helical membrane-spanning segment; sequence HFAIRHFAYLVGCAVIAAVVL. Topologically, residues 91–99 are cytoplasmic; it reads RIEMSRWQQ. The helical transmembrane segment at 100-120 threads the bilayer; that stretch reads FSPLLLLIVGIMLVAVLLVGT. Topologically, residues 121–131 are periplasmic; the sequence is SVNGATRWLSV. Residues 132–154 traverse the membrane as a helical segment; sequence GPIRIQVAELAKFAFTIYMAGYL. At 155–163 the chain is on the cytoplasmic side; that stretch reads VRRHQEIRE. The chain crosses the membrane as a helical span at residues 164–184; it reads NAKGFYKPIAVFAVYAFLILM. Residues 185–186 are Periplasmic-facing; the sequence is QP. A helical membrane pass occupies residues 187 to 207; it reads DLGTVVVLFVGTVGLLFLAGA. Position 208 (arginine 208) is a topological domain, cytoplasmic. A helical transmembrane segment spans residues 209–229; sequence LLDFFALILTGVMAFVALVLL. At 230-291 the chain is on the periplasmic side; the sequence is EPYRMRRVTS…PEAHTDFIFA (62 aa). A helical transmembrane segment spans residues 292–312; sequence VIGEELGFIGIVVVLSVLLFV. The Cytoplasmic segment spans residues 313-336; that stretch reads ALRAIKLGNLCIEIDKPFEGYLAY. A helical membrane pass occupies residues 337–357; that stretch reads AIGIWFCFQTVVNVGASIGML. The Periplasmic portion of the chain corresponds to 358–364; it reads PTKGLTL. Residues 365–385 traverse the membrane as a helical segment; that stretch reads PFISYGGSSLWVMTAAAMILI. The Cytoplasmic segment spans residues 386–410; sequence RIDHERRLSSIQAVQGKKVNDNREY.

It belongs to the SEDS family. FtsW subfamily.

Its subcellular location is the cell inner membrane. The enzyme catalyses [GlcNAc-(1-&gt;4)-Mur2Ac(oyl-L-Ala-gamma-D-Glu-L-Lys-D-Ala-D-Ala)](n)-di-trans,octa-cis-undecaprenyl diphosphate + beta-D-GlcNAc-(1-&gt;4)-Mur2Ac(oyl-L-Ala-gamma-D-Glu-L-Lys-D-Ala-D-Ala)-di-trans,octa-cis-undecaprenyl diphosphate = [GlcNAc-(1-&gt;4)-Mur2Ac(oyl-L-Ala-gamma-D-Glu-L-Lys-D-Ala-D-Ala)](n+1)-di-trans,octa-cis-undecaprenyl diphosphate + di-trans,octa-cis-undecaprenyl diphosphate + H(+). It participates in cell wall biogenesis; peptidoglycan biosynthesis. Functionally, peptidoglycan polymerase that is essential for cell division. The polypeptide is Probable peptidoglycan glycosyltransferase FtsW (Shewanella sediminis (strain HAW-EB3)).